The following is a 212-amino-acid chain: Ribosomal RNA small subunit methyltransferase G (212 aa).

S-adenosyl-L-methionine is bound by residues G80, L85, 131–132, and R146; that span reads AE.

Belongs to the methyltransferase superfamily. RNA methyltransferase RsmG family.

The protein localises to the cytoplasm. It carries out the reaction guanosine(527) in 16S rRNA + S-adenosyl-L-methionine = N(7)-methylguanosine(527) in 16S rRNA + S-adenosyl-L-homocysteine. Specifically methylates the N7 position of guanine in position 527 of 16S rRNA. The protein is Ribosomal RNA small subunit methyltransferase G of Stenotrophomonas maltophilia (strain R551-3).